A 381-amino-acid chain; its full sequence is MAEQPIRYEFIKECKQTGARLGKVHTPHGSFETPVFMPVGTLATVKTMSPEELKAMDAGIILSNTYHLWLRPGQDIVKEAGGLHKFMNWDRAILTDSGGFQVFSLSKFRNIEEEGVHFRNHLNGDKLFLSPEKAMEIQNALGSDIMMAFDECPPYPAEYDYMKRSVERTSRWAERCLNAHNRQDEQGLFGIVQGGEYEDLRTQSAKDLISLDFPGYAIGGLSVGEPKDVMNRVLEFTTPLLPKDKPRYLMGVGSPDALIDGAIRGVDMFDCVLPTRIARNGTVFTAEGRLNMKNAKFERDFRPIDEECDCYTCKNYTRAYIRHLIRCNETFGLRLTTYHNLHFLLHLMEQVRQAIREDRLGDFREEFFERYGYNKPNAKSF.

Catalysis depends on aspartate 96, which acts as the Proton acceptor. Substrate contacts are provided by residues 96 to 100 (DSGGF), aspartate 150, glutamine 193, and glycine 220. Residues 251–257 (GVGSPDA) are RNA binding. Catalysis depends on aspartate 270, which acts as the Nucleophile. An RNA binding; important for wobble base 34 recognition region spans residues 275 to 279 (TRIAR). Zn(2+)-binding residues include cysteine 308, cysteine 310, cysteine 313, and histidine 339.

The protein belongs to the queuine tRNA-ribosyltransferase family. As to quaternary structure, homodimer. Within each dimer, one monomer is responsible for RNA recognition and catalysis, while the other monomer binds to the replacement base PreQ1. Requires Zn(2+) as cofactor.

It carries out the reaction 7-aminomethyl-7-carbaguanine + guanosine(34) in tRNA = 7-aminomethyl-7-carbaguanosine(34) in tRNA + guanine. Its pathway is tRNA modification; tRNA-queuosine biosynthesis. Catalyzes the base-exchange of a guanine (G) residue with the queuine precursor 7-aminomethyl-7-deazaguanine (PreQ1) at position 34 (anticodon wobble position) in tRNAs with GU(N) anticodons (tRNA-Asp, -Asn, -His and -Tyr). Catalysis occurs through a double-displacement mechanism. The nucleophile active site attacks the C1' of nucleotide 34 to detach the guanine base from the RNA, forming a covalent enzyme-RNA intermediate. The proton acceptor active site deprotonates the incoming PreQ1, allowing a nucleophilic attack on the C1' of the ribose to form the product. After dissociation, two additional enzymatic reactions on the tRNA convert PreQ1 to queuine (Q), resulting in the hypermodified nucleoside queuosine (7-(((4,5-cis-dihydroxy-2-cyclopenten-1-yl)amino)methyl)-7-deazaguanosine). This is Queuine tRNA-ribosyltransferase from Bacillus subtilis (strain 168).